The primary structure comprises 396 residues: MTTVQTSVYEPLTEPKAVALAVRLGLFRDGTPLACREIGDGNLNLVFHIVDQETKQGVIIKQALPYAKVVGESWPLTLKRAVIESNALRTFASYVPQYVPKVYYSDESLAITVMEDLSRLQIARKGLIEGKTYPLLSQHIGEFVAKTAFYTSDFGMNQQEKKKLAQSFVNPELCKITEDLVFTDPFFDHETNNFEDELRPDVEALWRDDRLHLEAAKLKRKFLTEADVLLHGDLHTGSIFVSADETKVIDPEFAFYGPIGFDLGQFFANLLLNALSRSELERQPLFDHIDRTWDVFASVFSNLWRTESVETYAATPGLLEDVLRHAFIDAVGFAGCEVIRRTIGLAHVADLDGIEHKDERLVAKRHALRLGRRLIIERRVFTGTEDFRRLFAETEQ.

ATP contacts are provided by residues Asn-44, Lys-61, and 115 to 117 (EDL). Asp-233 provides a ligand contact to substrate. 250-252 (DPE) provides a ligand contact to ATP. Substrate is bound at residue Arg-340.

The protein belongs to the methylthioribose kinase family. In terms of assembly, homodimer.

It carries out the reaction 5-(methylsulfanyl)-D-ribose + ATP = 5-(methylsulfanyl)-alpha-D-ribose 1-phosphate + ADP + H(+). It functions in the pathway amino-acid biosynthesis; L-methionine biosynthesis via salvage pathway; S-methyl-5-thio-alpha-D-ribose 1-phosphate from S-methyl-5'-thioadenosine (hydrolase route): step 2/2. Catalyzes the phosphorylation of methylthioribose into methylthioribose-1-phosphate. The sequence is that of Methylthioribose kinase from Geobacillus kaustophilus (strain HTA426).